The following is a 90-amino-acid chain: Antitoxin VapB35 (90 aa).

A disordered region spans residues 53–90 (GSVQPARVHGPAPRPTIPMRGGLDSGTLLERMRAEERY).

The protein belongs to the phD/YefM antitoxin family.

Its function is as follows. Antitoxin component of a type II toxin-antitoxin (TA) system. Neutralizes the effect of cognate toxin VapC35. This chain is Antitoxin VapB35 (vapB35), found in Mycobacterium tuberculosis (strain CDC 1551 / Oshkosh).